Consider the following 419-residue polypeptide: Histidine--tRNA ligase (419 aa).

This sequence belongs to the class-II aminoacyl-tRNA synthetase family. In terms of assembly, homodimer.

It is found in the cytoplasm. It carries out the reaction tRNA(His) + L-histidine + ATP = L-histidyl-tRNA(His) + AMP + diphosphate + H(+). In Desulfatibacillum aliphaticivorans, this protein is Histidine--tRNA ligase.